The chain runs to 326 residues: Biotin synthase (326 aa).

In terms of domain architecture, Radical SAM core spans 51–275 (NAVQRSTLLS…MMPTSFVRLS (225 aa)). [4Fe-4S] cluster-binding residues include Cys-66, Cys-70, and Cys-73. Cys-110, Cys-141, Cys-201, and Arg-273 together coordinate [2Fe-2S] cluster.

Belongs to the radical SAM superfamily. Biotin synthase family. Homodimer. The cofactor is [4Fe-4S] cluster. [2Fe-2S] cluster is required as a cofactor.

It carries out the reaction (4R,5S)-dethiobiotin + (sulfur carrier)-SH + 2 reduced [2Fe-2S]-[ferredoxin] + 2 S-adenosyl-L-methionine = (sulfur carrier)-H + biotin + 2 5'-deoxyadenosine + 2 L-methionine + 2 oxidized [2Fe-2S]-[ferredoxin]. It participates in cofactor biosynthesis; biotin biosynthesis; biotin from 7,8-diaminononanoate: step 2/2. Functionally, catalyzes the conversion of dethiobiotin (DTB) to biotin by the insertion of a sulfur atom into dethiobiotin via a radical-based mechanism. The chain is Biotin synthase from Aromatoleum aromaticum (strain DSM 19018 / LMG 30748 / EbN1) (Azoarcus sp. (strain EbN1)).